We begin with the raw amino-acid sequence, 449 residues long: Trigger factor (449 aa).

A PPIase FKBP-type domain is found at Gly-173–Pro-258.

Belongs to the FKBP-type PPIase family. Tig subfamily.

It localises to the cytoplasm. The catalysed reaction is [protein]-peptidylproline (omega=180) = [protein]-peptidylproline (omega=0). Its function is as follows. Involved in protein export. Acts as a chaperone by maintaining the newly synthesized protein in an open conformation. Functions as a peptidyl-prolyl cis-trans isomerase. This chain is Trigger factor, found in Burkholderia mallei (strain NCTC 10229).